The following is a 94-amino-acid chain: Integration host factor subunit beta (94 aa).

Belongs to the bacterial histone-like protein family. In terms of assembly, heterodimer of an alpha and a beta chain.

Functionally, this protein is one of the two subunits of integration host factor, a specific DNA-binding protein that functions in genetic recombination as well as in transcriptional and translational control. This Mannheimia succiniciproducens (strain KCTC 0769BP / MBEL55E) protein is Integration host factor subunit beta.